Reading from the N-terminus, the 98-residue chain is UPF0251 protein Sputw3181_3483 (98 aa).

The protein belongs to the UPF0251 family.

The protein is UPF0251 protein Sputw3181_3483 of Shewanella sp. (strain W3-18-1).